We begin with the raw amino-acid sequence, 96 residues long: Co-chaperonin GroES (96 aa).

It belongs to the GroES chaperonin family. Heptamer of 7 subunits arranged in a ring. Interacts with the chaperonin GroEL.

The protein resides in the cytoplasm. Together with the chaperonin GroEL, plays an essential role in assisting protein folding. The GroEL-GroES system forms a nano-cage that allows encapsulation of the non-native substrate proteins and provides a physical environment optimized to promote and accelerate protein folding. GroES binds to the apical surface of the GroEL ring, thereby capping the opening of the GroEL channel. This is Co-chaperonin GroES from Teredinibacter turnerae (strain ATCC 39867 / T7901).